The sequence spans 289 residues: uncharacterized protein (289 aa).

9 helical membrane passes run 4–24 (NLLAVLFALASALTIAWGTVV), 44–64 (LNALMTPMWWAGMSTAMLAYF), 68–88 (VALGFGTLLVVQPVLVLSLMF), 106–126 (IFWATLLTVAVGIMIVLGRPL), 138–158 (IPVLLVGVAVMGGMWLLAEYV), 166–186 (ILGLVTGALFGYVAVMSKAAV), 196–216 (GLILNWEGYGLILTALLGTIV), 230–250 (LPAMTIAEPIVAFSLGYLVLG), and 258–278 (WEWIAMGIALLVMIVSTIALS).

Its subcellular location is the cell membrane. This is an uncharacterized protein from Corynebacterium glutamicum (strain ATCC 13032 / DSM 20300 / JCM 1318 / BCRC 11384 / CCUG 27702 / LMG 3730 / NBRC 12168 / NCIMB 10025 / NRRL B-2784 / 534).